Reading from the N-terminus, the 427-residue chain is ATP-dependent RNA helicase DDX39A (427 aa).

A compositionally biased stretch (acidic residues) spans 1–19; that stretch reads MAEQDVENDLLDYDEEEEP. Residues 1–34 are disordered; that stretch reads MAEQDVENDLLDYDEEEEPQAPQESTPAPPKKDI. Ala-2 bears the N-acetylalanine mark. Residue Lys-31 forms a Glycyl lysine isopeptide (Lys-Gly) (interchain with G-Cter in SUMO2) linkage. Position 35 is an N6-acetyllysine; alternate (Lys-35). A Glycyl lysine isopeptide (Lys-Gly) (interchain with G-Cter in SUMO2); alternate cross-link involves residue Lys-35. A Phosphoserine modification is found at Ser-37. Residues 44 to 72 carry the Q motif motif; the sequence is SGFRDFLLKPELLRAIVDCGFEHPSEVQH. Residues 75–248 enclose the Helicase ATP-binding domain; it reads IPQAILGMDV…RKFMQDPMEV (174 aa). 88–95 is a binding site for ATP; the sequence is AKSGMGKT. Residues Lys-154 and Lys-162 each participate in a glycyl lysine isopeptide (Lys-Gly) (interchain with G-Cter in SUMO2) cross-link. Position 171 is a phosphothreonine (Thr-171). The short motif at 195-198 is the DECD box element; that stretch reads DECD. Residues Lys-240 and Lys-255 each participate in a glycyl lysine isopeptide (Lys-Gly) (interchain with G-Cter in SUMO2) cross-link. In terms of domain architecture, Helicase C-terminal spans 260–421; sequence GLQQYYVKLK…ELPEEIDIST (162 aa). Ser-426 carries the phosphoserine modification.

The protein belongs to the DEAD box helicase family. DECD subfamily. As to quaternary structure, binds ALYREF/THOC4 and DDX39B/BAT1. Interacts with the apo-AREX complex component SARNP. Interacts with MX1. Interacts with MCM3AP isoform GANP. Interacts with ECD. Interacts with PHAX; this interaction stimulates PHAX RNA binding activity. In terms of assembly, (Microbial infection) Interacts with human cytomegalovirus/HHV-5 protein UL69. SUMOylated by RANBP2; SUMOylation modification affects its ability to bind RNA. In terms of tissue distribution, detected in testis, and at lower levels in brain, kidney, lung, thymus, spleen and salivary gland.

The protein localises to the nucleus. It localises to the cytoplasm. The enzyme catalyses ATP + H2O = ADP + phosphate + H(+). Its function is as follows. Helicase that plays an essential role in mRNA export and is involved in multiple steps in RNA metabolism including alternative splicing. Regulates nuclear mRNA export to the cytoplasm through association with ECD. Also involved in spliceosomal uridine-rich small nuclear RNA (U snRNA) export by stimulating the RNA binding of adapter PHAX. Plays a role in the negative regulation of type I IFN production by increasing the nuclear retention of antiviral transcripts and thus reducing their protein expression. Independently of the interferon pathway, plays an antiviral role against alphaviruses by binding to a 5' conserved sequence element in the viral genomic RNA. The polypeptide is ATP-dependent RNA helicase DDX39A (DDX39A) (Homo sapiens (Human)).